The following is a 2586-amino-acid chain: Highly reducing polyketide synthase FUM1 (2586 aa).

The region spanning 29-451 is the Ketosynthase family 3 (KS3) domain; that stretch reads VLPVAIVGMG…GANAHCIIET (423 aa). Active-site for beta-ketoacyl synthase activity residues include Cys201, His336, and His374. The malonyl-CoA:ACP transacylase (MAT) domain stretch occupies residues 609–928; the sequence is IFTGQGAQWV…TESLLKLAGE (320 aa). The N-terminal hotdog fold stretch occupies residues 980 to 1111; that stretch reads HELLGSRTLE…GQVRPGQDAH (132 aa). A dehydratase (DH) domain region spans residues 980–1269; sequence HELLGSRTLE…LEDGKFSPLE (290 aa). Positions 980–1274 constitute a PKS/mFAS DH domain; sequence HELLGSRTLE…FSPLEMDLAE (295 aa). His1012 (proton acceptor; for dehydratase activity) is an active-site residue. Residues 1125 to 1274 are C-terminal hotdog fold; that stretch reads QHYPRLVDNL…FSPLEMDLAE (150 aa). The active-site Proton donor; for dehydratase activity is Asp1186. Residues 1450–1627 form a methyltransferase (CMet) domain region; sequence DFFATAGHTR…GFSGVDSAIY (178 aa). An enoyl reductase (ER) (ER) domain region spans residues 1862-2172; that stretch reads GLLQTLGWVP…KGVHLGKIVV (311 aa). The tract at residues 2197–2373 is ketoreductase (KR) domain; that stretch reads ASYLLVGGLG…ASVLQIGLIE (177 aa). Positions 2486–2565 constitute a Carrier domain; that stretch reads PATVELVTNE…GLARLTVDGL (80 aa). An O-(pantetheine 4'-phosphoryl)serine modification is found at Ser2524.

It participates in mycotoxin biosynthesis. Its function is as follows. Highly reducing polyketide synthase; part of the gene cluster that mediates the biosynthesis of fumonisins B1 (FB1), B2 (FB2), B3 (FB3), and B4 (FB4), which are carcinogenic mycotoxins. The biosynthesis starts with the FUM1-catalyzed carbon chain assembly from one molecule of acetyl-CoA, eight molecules of malonyl-CoA, and two molecules of methionine (in S-adenosyl form). The C18 polyketide chain is released from the enzyme by a nucleophilic attack of a carbanion, which is derived from R-carbon of alanine by decarboxylation, on the carbonyl carbon of polyketide acyl chain. This step is catalyzed by the pyridoxal 5'-phosphate-dependent aminoacyl transferase FUM8. The resultant 3-keto intermediate is then stereospecifically reduced to a 3-hydroxyl product by reductase FUM13. Subsequent oxidations at C-10 by the cytochrome P450 monooxygenase FUM2, C-14 and C-15 by FUM6, FUM12 or FUM15, tricarballylic esterification of the hydroxyl groups on C-14 and C-15 by acyltransferase FUM14, and C-5 hydroxylation by 2-keto-glutarate-dependent dioxygenase FUM3 furnish the biosynthesis of fumonisins. The tricarballylic moieties are most likely derived from the citric acid cycle, and their addition to the carbon backbone may involve FUM7, FUM10, FUM11 and FUM14. In Gibberella moniliformis (strain M3125 / FGSC 7600) (Maize ear and stalk rot fungus), this protein is Highly reducing polyketide synthase FUM1.